Consider the following 427-residue polypeptide: Serine--tRNA ligase (427 aa).

232–234 (TAE) contacts L-serine. ATP is bound at residue 263–265 (RSE). E286 is an L-serine binding site. Residue 350 to 353 (EISS) coordinates ATP. S385 contacts L-serine.

It belongs to the class-II aminoacyl-tRNA synthetase family. Type-1 seryl-tRNA synthetase subfamily. Homodimer. The tRNA molecule binds across the dimer.

It is found in the cytoplasm. The catalysed reaction is tRNA(Ser) + L-serine + ATP = L-seryl-tRNA(Ser) + AMP + diphosphate + H(+). The enzyme catalyses tRNA(Sec) + L-serine + ATP = L-seryl-tRNA(Sec) + AMP + diphosphate + H(+). Its pathway is aminoacyl-tRNA biosynthesis; selenocysteinyl-tRNA(Sec) biosynthesis; L-seryl-tRNA(Sec) from L-serine and tRNA(Sec): step 1/1. Its function is as follows. Catalyzes the attachment of serine to tRNA(Ser). Is also able to aminoacylate tRNA(Sec) with serine, to form the misacylated tRNA L-seryl-tRNA(Sec), which will be further converted into selenocysteinyl-tRNA(Sec). This is Serine--tRNA ligase from Aromatoleum aromaticum (strain DSM 19018 / LMG 30748 / EbN1) (Azoarcus sp. (strain EbN1)).